We begin with the raw amino-acid sequence, 1276 residues long: Component of gems protein 5 (1276 aa).

The interval 53-55 is interaction with U4 snRNA; sequence NWY. WD repeat units follow at residues 92-139, 183-223, 228-268, 271-336, 364-405, 438-481, 485-522, and 530-574; these read GHTD…DDHN, EHKA…VFPI, GNNI…TVCK, AHSA…IESG, NDKQ…SPPE, TTKN…IKIQ, GFVYSIDTCSYSPNTFAIGCGDNTIRLWSPTENSKDAY, and GIQS…SKIF. The interval 138–157 is disordered; the sequence is HNEDTEIGDDFKHGSGGGGS. The interval 586 to 652 is disordered; that stretch reads IWKPPPTPTP…NSNNEQQPNK (67 aa). The segment covering 598–646 has biased composition (low complexity); it reads NINNNNNNNNNNNNNNNNNNNNNNNNNNNNNNNNNNNNINNNNNNNSNN. WD repeat units follow at residues 688 to 727 and 729 to 771; these read TFSKHKTDINFNLNGDMISIGYSDGTIDIFTSEFLFLTRI and EHKK…NQNE. A compositionally biased stretch (basic and acidic residues) spans 772-793; that stretch reads NEKKIDNEKGKENENEKGKENE. Residues 772–809 are disordered; sequence NEKKIDNEKGKENENEKGKENENENENENENENENENE. Positions 778–829 form a coiled coil; it reads NEKGKENENEKGKENENENENENENENENENENEIENIVNNNNENDTEIEIK. Residues 794–809 are compositionally biased toward acidic residues; it reads NENENENENENENENE. WD repeat units lie at residues 863–903 and 906–946; these read GHKN…AISN and GHDG…FKTV. Positions 967-997 are disordered; the sequence is ITEQQQQQQQPQSPIKSNPDQSNNPSLVPPI. The span at 979–992 shows a compositional bias: polar residues; sequence SPIKSNPDQSNNPS.

The protein belongs to the WD repeat gemin-5 family. Part of the core SMN complex.

The protein localises to the nucleus. The protein resides in the nucleoplasm. It localises to the gem. It is found in the cytoplasm. In terms of biological role, the SMN complex catalyzes the assembly of small nuclear ribonucleoproteins (snRNPs), the building blocks of the spliceosome, and thereby plays an important role in the splicing of cellular pre-mRNAs. Most spliceosomal snRNPs contain a common set of Sm proteins SNRPB, SNRPD1, SNRPD2, SNRPD3, SNRPE, SNRPF and SNRPG that assemble in a heptameric protein ring on the Sm site of the small nuclear RNA to form the core snRNP (Sm core). In the cytosol, the Sm proteins SNRPD1, SNRPD2, SNRPE, SNRPF and SNRPG are trapped in an inactive 6S pICln-Sm complex by the chaperone CLNS1A that controls the assembly of the core snRNP. To assemble core snRNPs, the SMN complex accepts the trapped 5Sm proteins from CLNS1A forming an intermediate. Binding of snRNA inside 5Sm ultimately triggers eviction of the SMN complex, thereby allowing binding of SNRPD3 and SNRPB to complete assembly of the core snRNP. Within the SMN complex, GEMIN5 recognizes and delivers the small nuclear RNAs (snRNAs) to the SMN complex. Binds to the 7-methylguanosine cap of RNA molecules. This is Component of gems protein 5 (gemin5) from Dictyostelium discoideum (Social amoeba).